The following is a 766-amino-acid chain: FRSTAAGRCLPVTCCVFPRHFRVSSSSILPSNAKVVGGCKKNRQIAVEAAQSLEVDSQQPMNQEEVSEKMRQLREKIRWMLQNMDDGEISVSPYDTAWVAMVEDIGGGGGPQFPTSLEWISNNQLDDGSWGDLRFLIYDRILNTLACVAVLTQWKMHLHKCQKGLRFIRENIDNLENGNDEMMPVGFEVAFPSLIQTAKKVGIKIPTDSPFMKNIYAKRDLKLRKIPMDILHTKPTTLLHSLEGMEGLDWEKLLNLRTDDGSFLMSPSSTAYVFRHTKDELCHQYLLKSVNKFNGGVPNVYPVDMFEHLWCVDRLQRLGISRYFQVEIQECLDYVYKYWTNKGICWARNTNVQDVDDTAMGFRLLRLHGYDVSTDAFKQFEKAGEFCSFPGQSTDALTGMYNLYRASQTMFNGEHILADAKEYSTNFLHKKRLANAIVDKWIITKDLPGEVGYALDVPFYASLPRLEARFFLEQYGGDDDVWIGKTLYRMLYVNCDTHLELAKLDYEKCQAVHQLEWESIQKWYRDWNLVEFGLSERSLLLAYYIAASTVFEPERSRERLAWAITAILVKTIASQRQLPLETKGESLGSILENEDGGRLIEFLINTIHQLSSEIVVAEGRDITQQLSNTWQKWLKTCKEGGDDDLGEAEARLIVHTLHLSSGLDESSFSHPKYHQLLEATSKVCGQLRLFQSRKQVDVDLATGTTFQIEAGMQELVKLVFTNSSEDLDSLTKQSFFSIARSFYYTAYCDEGAINSHIDKVLFEKID.

Residues 1 to 30 (FRSTAAGRCLPVTCCVFPRHFRVSSSSILP) constitute a chloroplast transit peptide. Lysine 222 is a substrate binding site. Mg(2+) contacts are provided by aspartate 354 and aspartate 356. Positions 354–357 (DVDD) match the DXDD motif motif. Lysine 440 contacts substrate.

Belongs to the terpene synthase family. Tpsc subfamily. It depends on Mg(2+) as a cofactor. Accumulates in leaves, and, at low levels, in germinating seeds.

The protein resides in the plastid. Its subcellular location is the chloroplast. The enzyme catalyses (2E,6E,10E)-geranylgeranyl diphosphate = ent-copalyl diphosphate. The protein operates within plant hormone biosynthesis; gibberellin biosynthesis. Its pathway is secondary metabolite biosynthesis; terpenoid biosynthesis. Its function is as follows. Involved in the biosynthesis of ent-kaurene diterpenoids natural products such as oridonin, miltiradiene, eriocalyxin B and nezukol, known to exhibit antitumor, anti-inflammatory and antibacterial activities, and in the production of gibberellins phytohormones. Catalyzes the conversion of (2E,6E,10E)-geranylgeranyl diphosphate (GGPP) to ent-copalyl diphosphate (ent-CPP). This Isodon eriocalyx (Plectranthus eriocalyx) protein is Ent-copalyl diphosphate synthase 3.